Here is a 184-residue protein sequence, read N- to C-terminus: Flagellar transcriptional regulator FlhC (184 aa).

Zn(2+)-binding residues include cysteine 144, cysteine 147, cysteine 163, and cysteine 166.

It belongs to the FlhC family. As to quaternary structure, heterohexamer composed of two FlhC and four FlhD subunits. Each FlhC binds a FlhD dimer, forming a heterotrimer, and a hexamer assembles by dimerization of two heterotrimers. The cofactor is Zn(2+).

It is found in the cytoplasm. Its function is as follows. Functions in complex with FlhD as a master transcriptional regulator that regulates transcription of several flagellar and non-flagellar operons by binding to their promoter region. Activates expression of class 2 flagellar genes, including fliA, which is a flagellum-specific sigma factor that turns on the class 3 genes. Also regulates genes whose products function in a variety of physiological pathways. The protein is Flagellar transcriptional regulator FlhC of Verminephrobacter eiseniae (strain EF01-2).